The sequence spans 1316 residues: MSTVDKMLIKGIRSFDPENKNVVTFFRPLTLIVGANGAGKTTIIECLKVSCTGELPPNARSGHSFIHDPKVAGETETKAQIKLRFKTAAGKDVVCIRSFQLTQKASKMEYKAIESVLQTINPHTGEKVCLSYRCADMDREIPALMGVSKAILENVIFVHQDESNWPLQDPSTLKKKFDDIFSATRYTKALEVIKKLHKDQAQEIKTFKLKLENLQTLKDAAYKLRESIAQDQERTESSKVQMLELETSVQKVDAEVHNKEMMLKDLRKLQDQVSIKTAERSTLFKEQQRQYAALPEENEDTIEELKEWKSKFEERLALLGTKIRKMEREMVDTETTISSLHNAKTNYMLEISKLQTEAEAHMLLKNERDSTIQNIFFHYNLGNVPSTPFSTEVVLNLTNRIKSRLGELEMDLLDKKKSNETALSTAWDCYMDANDRWKSIEAQKRAKDEIKMGISKRIEEKEIERDSFEFEISTVDVKQTDEREKQVQVELERKTKQNSERGFESKIEQKQHEIYSLEHKIKTLNRERDVMAGDAEDRVKLSLKKTEQENLKKKHKKIIDECKDRIRGVLKGRLPPEKDMKREIVQALRSIEREYDDLSLKSREAEKEVNMLQMKIQEVNNSLFKHNKDTESRKRYIESKLQALKQESVTIDAYPKLLESAKDKRDDRKREYNMANGMRQMFEPFEKRARQEHSCPCCERSFTADEEASFIKKQRVKASSTGEHLKALAVESSNADSVFQQLDKLRAVFEEYSKLTTEIIPLAEKTLQEHTEELGQKSEALDDVLGISAQIKADKDSIEALVQPLENADRIFQEIVSYQKQIEDLEYKLDFRGLGVKTMEEIQSELSSLQSSKDKLHGELEKLRDDQIYMERDISCLQARWHAVREEKAKAANLLRDVTKAEEDLERLAEEKSQLDLDVKYLTEALGPLSKEKEQLLSDYNDMKIRRNQEYEELAEKKRNYQQEVEALLKASYKINEYHDLKKGERLDDIQEKQRLSDSQLQSCEARKNELAGELNRNKDLMRNQDQLRRNIEDNLNYRTTKAKVEELTREIESLEEQILNIGGIAAVEAEIVKILRERERLLSELNRCRGTVSVYESSISKNRVELKQAQYKDIDKRHFDQLIQLKTTEMANKDLDRYYNALDKALMRFHTMKMEEINKIIRELWQQTYRGQDMDYIRIHSDSEGAGTRSYSYKVLMQTGDTELEMRGRCSAGQKVLASLIIRLALAETFCLNCGILALDEPTTNLDGPNSESLAGALLRIMEDRKGQENFQLIVITHDERFAQMIGQRQHAEKYYRVAKDDMQHSIIEAQEIFD.

Arg13, Asn36, Gly37, Gly39, Lys40, Thr41, Thr42, Ile66, Asp68, and Gln160 together coordinate ATP. Thr41 contacts Mg(2+). Gln160 is a binding site for Mg(2+). Coiled coils occupy residues 194–343 (KKLH…LHNA) and 648–686 (SVTI…EPFE). The region spanning 648–747 (SVTIDAYPKL…VFQQLDKLRA (100 aa)) is the Zinc-hook domain. Residues Cys695 and Cys698 each contribute to the Zn(2+) site. Coiled coils occupy residues 719-747 (SSTG…KLRA), 762-972 (LAEK…LKAS), and 999-1090 (SQLQ…NRCR).

It belongs to the SMC family. RAD50 subfamily. As to quaternary structure, component of the MRN complex composed of two heterodimers RAD50 and MRE11 associated with a single NBS1. The cofactor is Zn(2+). As to expression, widely expressed, predominantly in meristematic and reproductive tissues.

Its subcellular location is the nucleus. It localises to the chromosome. The enzyme catalyses ATP + H2O = ADP + phosphate + H(+). In terms of biological role, component of the MRN complex, which plays a central role in double-strand break (DSB) repair, DNA recombination, maintenance of telomere integrity and meiosis. The MRN complex is involved in the repair of DNA double-strand breaks (DSBs) via homologous recombination (HR), an error-free mechanism which primarily occurs during S and G2 phases. The complex (1) mediates the end resection of damaged DNA, which generates proper single-stranded DNA, a key initial steps in HR, and is (2) required for the recruitment of other repair factors and efficient activation of ATM and ATR upon DNA damage. The MRN complex possesses single-strand endonuclease activity and double-strand-specific 3'-5' exonuclease activity, which are provided by MRE11, to initiate end resection, which is required for single-strand invasion and recombination. Within the complex, RAD50 is both required to bind DNA ends and hold them in close proximity and regulate the activity of MRE11. RAD50 provides an ATP-dependent control of MRE11 by positioning DNA ends into the MRE11 active site: ATP-binding induces a large structural change from an open form with accessible MRE11 nuclease sites into a closed form. Required during meiosis for both male and female gametophytic development, for pairing and synapsis of homologous chromosomes during the early stages of meiotic recombination, especially during the pachytene stage of the first division. The sequence is that of DNA repair protein RAD50 (RAD50) from Arabidopsis thaliana (Mouse-ear cress).